The chain runs to 798 residues: Integrin beta-1 (798 aa).

Residues 1–20 (MNLQPIFWIGLISSICCVFA) form the signal peptide. The region spanning 26-76 (RCLKANAKSCGECIQAGPNCGWCTNSTFLQEGMPTSARCDDLEALKKKGCP) is the PSI domain. Cystine bridges form between cysteine 27–cysteine 45, cysteine 35–cysteine 464, cysteine 38–cysteine 64, cysteine 48–cysteine 75, cysteine 207–cysteine 213, cysteine 261–cysteine 301, cysteine 401–cysteine 415, cysteine 435–cysteine 462, cysteine 466–cysteine 486, cysteine 477–cysteine 489, cysteine 491–cysteine 500, cysteine 502–cysteine 533, cysteine 516–cysteine 531, cysteine 525–cysteine 536, cysteine 538–cysteine 553, cysteine 555–cysteine 576, cysteine 560–cysteine 574, cysteine 568–cysteine 579, cysteine 581–cysteine 590, cysteine 592–cysteine 615, cysteine 599–cysteine 613, cysteine 607–cysteine 618, cysteine 620–cysteine 630, cysteine 633–cysteine 636, cysteine 640–cysteine 691, cysteine 646–cysteine 665, cysteine 649–cysteine 661, and cysteine 699–cysteine 723. N-linked (GlcNAc...) asparagine glycosylation is present at asparagine 50. The interval 75 to 107 (CPPDDIENPRGSKDIKKNKNVTNRSKGTAEKLK) is disordered. The span at 81–91 (ENPRGSKDIKK) shows a compositional bias: basic and acidic residues. Asparagine 94 and asparagine 97 each carry an N-linked (GlcNAc...) asparagine glycan. Residues 140-378 (DYPIDLYYLM…QLIIDAYNSL (239 aa)) form the VWFA domain. Mg(2+) contacts are provided by serine 152 and serine 154. Ca(2+) contacts are provided by serine 154, aspartate 157, aspartate 158, and glutamate 189. Residues 207–213 (CTSEQNC) form a CX3CL1-binding region. A glycan (N-linked (GlcNAc...) asparagine) is linked at asparagine 212. Ca(2+) is bound by residues asparagine 244, aspartate 246, proline 248, and glutamate 249. Glutamate 249 provides a ligand contact to Mg(2+). N-linked (GlcNAc...) asparagine glycosylation is present at asparagine 269. Residues 295-314 (LPNDGQCHLENNMYTMSHYY) form a CX3CL1-binding region. Position 362 (alanine 362) interacts with Ca(2+). N-linked (GlcNAc...) asparagine glycosylation is found at asparagine 363, asparagine 406, and asparagine 417. Positions 383-465 (ILENSKLSEG…VILQYICECE (83 aa)) are interaction with TMEM182. I-EGF domains lie at 466–501 (CQSE…RHCE), 502–554 (CSTD…KFCE), 555–591 (CDNF…SACD), and 592–631 (CSLD…QTCE). N-linked (GlcNAc...) asparagine glycosylation occurs at asparagine 481. A glycan (N-linked (GlcNAc...) asparagine) is linked at asparagine 520. An N-linked (GlcNAc...) asparagine glycan is attached at asparagine 584. Asparagine 669 carries an N-linked (GlcNAc...) asparagine glycan. A helical transmembrane segment spans residues 729–749 (IIPIVAGVVAGIVLIGLALLL). Residues 762-767 (EFAKFE) form a signal for sorting from recycling endosomes; interaction with ACAP1 region. Threonine 777 is subject to Phosphothreonine. Tyrosine 783 carries the post-translational modification Phosphotyrosine. Serine 785 carries the phosphoserine modification. Residues 785-792 (SAVTTVVN) form an interaction with ITGB1BP1 region. Phosphothreonine is present on threonine 789. Lysine 794 is subject to N6-acetyllysine; alternate. A Glycyl lysine isopeptide (Lys-Gly) (interchain with G-Cter in SUMO1); alternate cross-link involves residue lysine 794.

Belongs to the integrin beta chain family. As to quaternary structure, interacts with seprase FAP (seprase); the interaction occurs at the cell surface of invadopodia membrane in a collagen-dependent manner. Heterodimer of an alpha and a beta subunit. Beta-1 associates with either alpha-1, alpha-2, alpha-3, alpha-4, alpha-5, alpha-6, alpha-7, alpha-8, alpha-9, alpha-10, alpha-11 or alpha-V. ITGA6:ITGB1 is found in a complex with CD9; interaction takes place in oocytes and is involved in sperm-egg fusion. Binds LGALS3BP and NMRK2, when associated with alpha-7, but not with alpha-5. Interacts with FLNA, FLNB, FLNC and RANBP9. Interacts with KRT1 in the presence of RACK1 and SRC. Interacts with JAML; integrin alpha-4/beta-1 may regulate leukocyte to endothelial cells adhesion by controlling JAML homodimerization. Interacts with RAB21. Interacts (via the cytoplasmic region) with RAB25 (via the hypervariable C-terminal region). Interacts with MYO10. Interacts with ITGB1BP1 (via C-terminal region); the interaction is a prerequisite for focal adhesion disassembly. Interacts with TLN1; the interaction is prevented by competitive binding of ITGB1BP1. Interacts with ACAP1; required for ITGB1 recycling. Interacts with ASAP3. Interacts with FERMT2; the interaction is inhibited in presence of ITGB1BP1. Interacts with DAB2. Interacts with FGR and HCK. Interacts with alpha-7A and alpha-7B in adult skeletal muscle. Interacts with alpha-7B in cardiomyocytes of adult heart. Interacts with EMP2; the interaction may be direct or indirect and ITGB1 has a heterodimer form. ITGA5:ITGB1 interacts with CCN3. ITGA4:ITGB1 is found in a ternary complex with CX3CR1 and CX3CL1. ITGA5:ITGB1 interacts with FBN1. ITGA5:ITGB1 acts as a receptor for fibronectin FN1 and mediates R-G-D-dependent cell adhesion to FN1. ITGA5:ITGB1 interacts with IL1B. Interacts with MDK. ITGA4:ITGB1 interacts with MDK; this interaction mediates MDK-induced osteoblast cells migration through PXN phosphorylation. ITGA6:ITGB1 interacts with MDK; this interaction mediates MDK-induced neurite-outgrowth. ITGA5:ITGB1 interacts with ACE2. Interacts with TMEM182 and LAMB1. Interacts with tensin TNS3; TNS3 also interacts with PEAK1, thus acting as an adapter molecule to bridge the association of PEAK1 with ITGB1. Interacts with tensin TNS4; the interaction displaces tensin TNS3 from the ITGB1 cytoplasmic tail and promotes ITGB1 stability. Integrin ITGA9:ITGB1 interacts with SPP1/OPN (via N-terminus). Integrin ITGA9:ITGB1 interacts with TNC/TNFN3 (via the 3rd Fibronectin type-III domain). Integrins ITGA4:ITGB1 and ITGA9:ITGB1 interact with SVEP1 (via Sushi domain 21); thereby inhibit Ca(2+) intracellular signaling and as a result repress vasocontraction. ITGA4:ITGB1 and ITGA5:ITGB1 interacts with SELP. Interacts with CD248. ITGA5:ITGB1 interacts with IGFBP1. ITGA4:ITGB1 interacts with BCAM. Interacts with ADGRG6.

The protein localises to the cell membrane. It localises to the cell projection. Its subcellular location is the invadopodium membrane. The protein resides in the ruffle membrane. It is found in the recycling endosome. The protein localises to the melanosome. It localises to the lamellipodium. Its subcellular location is the ruffle. The protein resides in the cell junction. It is found in the focal adhesion. Functionally, integrins alpha-1/beta-1, alpha-2/beta-1, alpha-10/beta-1 and alpha-11/beta-1 are receptors for collagen. Integrins alpha-1/beta-1 and alpha-2/beta-2 recognize the proline-hydroxylated sequence G-F-P-G-E-R in collagen. Integrins alpha-2/beta-1, alpha-3/beta-1, alpha-4/beta-1, alpha-5/beta-1, alpha-8/beta-1, alpha-10/beta-1, alpha-11/beta-1 and alpha-V/beta-1 are receptors for fibronectin. Alpha-4/beta-1 recognizes one or more domains within the alternatively spliced CS-1 and CS-5 regions of fibronectin. Integrin alpha-5/beta-1 is a receptor for fibrinogen. Integrin alpha-1/beta-1, alpha-2/beta-1, alpha-6/beta-1 and alpha-7/beta-1 are receptors for lamimin. Integrin alpha-6/beta-1 (ITGA6:ITGB1) is present in oocytes and is involved in sperm-egg fusion. Integrin alpha-4/beta-1 is a receptor for VCAM1 and recognizes the sequence Q-I-D-S in VCAM1. Integrin alpha-9/beta-1 is a receptor for VCAM1, cytotactin and osteopontin. It recognizes the sequence A-E-I-D-G-I-E-L in cytotactin. Integrin alpha-3/beta-1 is a receptor for epiligrin, thrombospondin and CSPG4. Integrin alpha-3/beta-1 provides a docking site for FAP (seprase) at invadopodia plasma membranes in a collagen-dependent manner and hence may participate in the adhesion, formation of invadopodia and matrix degradation processes, promoting cell invasion. Alpha-3/beta-1 may mediate with LGALS3 the stimulation by CSPG4 of endothelial cells migration. Integrin alpha-V/beta-1 is a receptor for vitronectin. Beta-1 integrins recognize the sequence R-G-D in a wide array of ligands. When associated with alpha-7/beta-1 integrin, regulates cell adhesion and laminin matrix deposition. Involved in promoting endothelial cell motility and angiogenesis. Involved in osteoblast compaction through the fibronectin fibrillogenesis cell-mediated matrix assembly process and the formation of mineralized bone nodules. May be involved in up-regulation of the activity of kinases such as PKC via binding to KRT1. Together with KRT1 and RACK1, serves as a platform for SRC activation or inactivation. Plays a mechanistic adhesive role during telophase, required for the successful completion of cytokinesis. ITGA4:ITGB1 binds to fractalkine (CX3CL1) and may act as its coreceptor in CX3CR1-dependent fractalkine signaling. ITGA4:ITGB1 and ITGA5:ITGB1 bind to PLA2G2A via a site (site 2) which is distinct from the classical ligand-binding site (site 1) and this induces integrin conformational changes and enhanced ligand binding to site 1. ITGA5:ITGB1 acts as a receptor for fibrillin-1 (FBN1) and mediates R-G-D-dependent cell adhesion to FBN1. ITGA5:ITGB1 is a receptor for IL1B and binding is essential for IL1B signaling. ITGA5:ITGB3 is a receptor for soluble CD40LG and is required for CD40/CD40LG signaling. Plays an important role in myoblast differentiation and fusion during skeletal myogenesis. ITGA9:ITGB1 may play a crucial role in SVEP1/polydom-mediated myoblast cell adhesion. Integrins ITGA9:ITGB1 and ITGA4:ITGB1 repress PRKCA-mediated L-type voltage-gated channel Ca(2+) influx and ROCK-mediated calcium sensitivity in vascular smooth muscle cells via their interaction with SVEP1, thereby inhibit vasocontraction. The polypeptide is Integrin beta-1 (ITGB1) (Pongo abelii (Sumatran orangutan)).